A 256-amino-acid chain; its full sequence is Nuclear shuttle protein (256 aa).

The Bipartite nuclear localization signal motif lies at 21-42 (YQGFRRTAIVTRHDGKRRQHQS). Residues 81 to 96 (QLGKIEPNRCRSYIKL) carry the Nuclear localization signal motif. Positions 150–187 (ELFGARINSHGNLAVMPSLKDRFYIRHLLKRVLSVDKD) are interaction with Arabidopsis thaliana NSI protein.

This sequence belongs to the begomovirus nuclear shuttle protein family. As to quaternary structure, binds to single-stranded and double-stranded viral DNA. Interacts with the host nuclear shuttle interacting (NSI) protein. This interaction may allow NSP to recruit NSI monomers to the viral genome and thus regulate nuclear export of viral genome by NSP.

It localises to the host nucleus. The protein resides in the host cytoplasm. The protein localises to the host cell membrane. Functionally, binds to the genomic viral ssDNA, shuttles it into and out of the cell nucleus. Begomoviruses use 2 proteins to transport their DNA from cell to cell. The nuclear shuttle protein (NSP) shuttles it between nucleus and cytoplasm and the movement protein (MP) probably transports the DNA-NSP complex to the cell periphery and facilitates movement across the cell wall. The chain is Nuclear shuttle protein from Macroptilium lathyroides (Lima bean).